The sequence spans 858 residues: Gamma-secretase-activating protein (858 aa).

The protein belongs to the GSAP family. As to quaternary structure, interacts with APP; specifically interacts with the CTF-alpha product of APP. Interacts with the gamma-secretase complex. The protein is first synthesized as a holoprotein form of 98 kDa and rapidly processed into the gamma-secretase-activating protein 16 kDa C-terminal form, which constitutes the predominant form.

The protein localises to the golgi apparatus. The protein resides in the trans-Golgi network. Its function is as follows. Regulator of gamma-secretase activity, which specifically activates the production of amyloid-beta protein (amyloid-beta protein 40 and amyloid-beta protein 42), without affecting the cleavage of other gamma-secretase targets such has Notch. The gamma-secretase complex is an endoprotease complex that catalyzes the intramembrane cleavage of integral membrane proteins such as Notch receptors and APP (amyloid-beta precursor protein). Specifically promotes the gamma-cleavage of APP CTF-alpha (also named APP-CTF) by the gamma-secretase complex to generate amyloid-beta, while it reduces the epsilon-cleavage of APP CTF-alpha, leading to a low production of AICD. In Mus musculus (Mouse), this protein is Gamma-secretase-activating protein (Gsap).